The chain runs to 2028 residues: Phosphatidylinositol 4-kinase alpha 1 (2028 aa).

The segment at proline 184–serine 241 is disordered. A compositionally biased stretch (polar residues) spans glutamine 192–tyrosine 215. Over residues serine 231–serine 241 the composition is skewed to low complexity. Residues threonine 1483–glutamine 1659 form the PIK helical domain. The interval valine 1660–valine 1773 is pleckstrin homology (PH) domain conferring phosphoinositide binding specificity. The region spanning valine 1734–threonine 2012 is the PI3K/PI4K catalytic domain. Positions leucine 1740–valine 1746 are G-loop. The interval glutamine 1876–asparagine 1884 is catalytic loop. Residues histidine 1895–serine 1920 form an activation loop region.

The protein belongs to the PI3/PI4-kinase family. Type III PI4K subfamily. In terms of assembly, interacts in vitro with actin filaments via its PH domain. In terms of tissue distribution, present in leaves and inflorescences.

The protein resides in the membrane. It is found in the cytoplasm. Its subcellular location is the perinuclear region. The enzyme catalyses a 1,2-diacyl-sn-glycero-3-phospho-(1D-myo-inositol) + ATP = a 1,2-diacyl-sn-glycero-3-phospho-(1D-myo-inositol 4-phosphate) + ADP + H(+). Repressed by PtdIns4P, adenosine and wortmannin, but stimulated by other negatively charged lipids such as PtdIns3P, PtdOH, and phosphatidyl-serine (PtdSer). Functionally, acts on phosphatidylinositol (PtdIns) in the first committed step in the production of the second messenger inositol-1,4,5,-trisphosphate. Can bind to phosphatidylinositol 4-monophosphate (PI-4-P or PtdIns4P), phosphatidylinositol 4,5-bisphosphate (PI-4,5-P2 or PtdIns4,5P2), and phosphatidic acid (PtdOH), but not to 3-phosphoinositides. May function upstream of the cold response phosphoinositide-dependent phospholipase C (PI-PLC) pathway. The polypeptide is Phosphatidylinositol 4-kinase alpha 1 (Arabidopsis thaliana (Mouse-ear cress)).